The following is a 408-amino-acid chain: LL-diaminopimelate aminotransferase (408 aa).

Substrate is bound by residues tyrosine 15 and glycine 42. Residues tyrosine 72, 108–109 (SK), tyrosine 132, asparagine 187, tyrosine 218, and 246–248 (SFS) each bind pyridoxal 5'-phosphate. Substrate-binding residues include lysine 109, tyrosine 132, and asparagine 187. Residue lysine 249 is modified to N6-(pyridoxal phosphate)lysine. Pyridoxal 5'-phosphate contacts are provided by arginine 257 and asparagine 291. Asparagine 291 and arginine 387 together coordinate substrate.

Belongs to the class-I pyridoxal-phosphate-dependent aminotransferase family. LL-diaminopimelate aminotransferase subfamily. Homodimer. Pyridoxal 5'-phosphate serves as cofactor.

It carries out the reaction (2S,6S)-2,6-diaminopimelate + 2-oxoglutarate = (S)-2,3,4,5-tetrahydrodipicolinate + L-glutamate + H2O + H(+). It functions in the pathway amino-acid biosynthesis; L-lysine biosynthesis via DAP pathway; LL-2,6-diaminopimelate from (S)-tetrahydrodipicolinate (aminotransferase route): step 1/1. Functionally, involved in the synthesis of meso-diaminopimelate (m-DAP or DL-DAP), required for both lysine and peptidoglycan biosynthesis. Catalyzes the direct conversion of tetrahydrodipicolinate to LL-diaminopimelate. This Prochlorococcus marinus (strain NATL1A) protein is LL-diaminopimelate aminotransferase.